Reading from the N-terminus, the 535-residue chain is cAMP-regulated D2 protein (535 aa).

An N-terminal signal peptide occupies residues 1 to 20; the sequence is MNKLLVFILLLLLLINISFA. A disulfide bridge links cysteine 89 with cysteine 109. Serine 213 (acyl-ester intermediate) is an active-site residue. A disulfide bond links cysteine 265 and cysteine 272. Active-site charge relay system residues include glutamate 338 and histidine 440. Asparagine 500 carries an N-linked (GlcNAc...) asparagine glycan.

Belongs to the type-B carboxylesterase/lipase family.

Its subcellular location is the cytoplasmic vesicle. The protein resides in the esterosome membrane. In Dictyostelium discoideum (Social amoeba), this protein is cAMP-regulated D2 protein (D2).